Reading from the N-terminus, the 105-residue chain is Cell division protein FtsB (105 aa).

The Cytoplasmic portion of the chain corresponds to 1–3; the sequence is MRL. Residues 4–21 traverse the membrane as a helical segment; that stretch reads FTLILMVVLALVQRQLWF. Over 22–105 the chain is Periplasmic; sequence GKNGLVEYRQ…NKQSSLPKSD (84 aa). A coiled-coil region spans residues 28-74; that stretch reads EYRQVSENLLRRQADNQKLQERNMLLKEDIEDLKSGLEAIEELARND.

Belongs to the FtsB family. As to quaternary structure, part of a complex composed of FtsB, FtsL and FtsQ.

The protein resides in the cell inner membrane. Its function is as follows. Essential cell division protein. May link together the upstream cell division proteins, which are predominantly cytoplasmic, with the downstream cell division proteins, which are predominantly periplasmic. The chain is Cell division protein FtsB from Tolumonas auensis (strain DSM 9187 / NBRC 110442 / TA 4).